Reading from the N-terminus, the 64-residue chain is Large ribosomal subunit protein uL30 (64 aa).

In terms of assembly, part of the 50S ribosomal subunit. The protein is methylated on either Ala-2 or Lys-3.

This Rhodopseudomonas palustris (strain ATCC BAA-98 / CGA009) protein is Large ribosomal subunit protein uL30.